Reading from the N-terminus, the 66-residue chain is Small ribosomal subunit protein bS21 (66 aa).

This sequence belongs to the bacterial ribosomal protein bS21 family.

The sequence is that of Small ribosomal subunit protein bS21 from Maridesulfovibrio salexigens (strain ATCC 14822 / DSM 2638 / NCIMB 8403 / VKM B-1763) (Desulfovibrio salexigens).